Consider the following 218-residue polypeptide: Adenylate kinase (218 aa).

ATP is bound at residue 10 to 15 (GAGKGT). Residues 30 to 59 (STGDMIRETIKSGSALGQELKKVLDAGELV) form an NMP region. Residues Thr-31, Arg-36, 57-59 (ELV), and Gln-92 contribute to the AMP site. An LID region spans residues 122 to 159 (GRRIHPASGRTYHTKFNPPKVADKDDVTGEPLITRTDD). ATP is bound by residues Arg-123 and 132 to 133 (TY). AMP is bound by residues Arg-156 and Arg-167. Gln-202 is an ATP binding site.

Belongs to the adenylate kinase family. As to quaternary structure, monomer.

It localises to the cytoplasm. It carries out the reaction AMP + ATP = 2 ADP. It functions in the pathway purine metabolism; AMP biosynthesis via salvage pathway; AMP from ADP: step 1/1. Its function is as follows. Catalyzes the reversible transfer of the terminal phosphate group between ATP and AMP. Plays an important role in cellular energy homeostasis and in adenine nucleotide metabolism. The polypeptide is Adenylate kinase (Francisella tularensis subsp. tularensis (strain FSC 198)).